The primary structure comprises 74 residues: UPF0435 protein ABC2298 (74 aa).

The protein belongs to the UPF0435 family.

This is UPF0435 protein ABC2298 from Shouchella clausii (strain KSM-K16) (Alkalihalobacillus clausii).